A 304-amino-acid chain; its full sequence is Phytol kinase 1, chloroplastic (304 aa).

The N-terminal 59 residues, 1 to 59, are a transit peptide targeting the chloroplast; the sequence is MAATLPLSPINHQLCRFGNNSLTTHRFCSPGFLISSPCFIGLTGMGSATQLRARRSLIS. A run of 6 helical transmembrane segments spans residues 71–91, 105–125, 129–149, 167–187, 191–211, and 227–247; these read VGATVAVLGGAYALVLSFESL, LVHILSGLLFVLAWPIFSGST, YFAAFVPLVNGLRLVINGLSI, ELLKGPLFYVLALLFSAVFFW, PIGMISLAMMCGGDGIADIMG, and WAGSISMFIFGFFISIALLYY.

This sequence belongs to the polyprenol kinase family.

Its subcellular location is the plastid. It localises to the chloroplast membrane. The catalysed reaction is phytol + CTP = phytyl phosphate + CDP + H(+). It participates in cofactor biosynthesis; tocopherol biosynthesis. In terms of biological role, kinase involved in the activation and reutilization of phytol from chlorophyll degradation in plant metabolism, including tocopherol biosynthesis. Catalyzes the conversion of phytol to phytol monophosphate (PMP) in the presence of CTP or UTP. No activity with ATP or GTP as phosphoryl donor. This Arabidopsis thaliana (Mouse-ear cress) protein is Phytol kinase 1, chloroplastic.